A 106-amino-acid chain; its full sequence is ATP-dependent Clp protease adapter protein ClpS (106 aa).

Belongs to the ClpS family. As to quaternary structure, binds to the N-terminal domain of the chaperone ClpA.

Functionally, involved in the modulation of the specificity of the ClpAP-mediated ATP-dependent protein degradation. The sequence is that of ATP-dependent Clp protease adapter protein ClpS from Citrobacter koseri (strain ATCC BAA-895 / CDC 4225-83 / SGSC4696).